Consider the following 307-residue polypeptide: Putative protein p53 (307 aa).

Residues 44 to 53 (DPHEPTEANK) are compositionally biased toward basic and acidic residues. Disordered stretches follow at residues 44 to 64 (DPHE…VKPQ) and 109 to 129 (ETKP…APEP).

The polypeptide is Putative protein p53 (53) (Escherichia coli (Bacteriophage APSE-1)).